Reading from the N-terminus, the 458-residue chain is Enolase (458 aa).

Glutamine 177 serves as a coordination point for (2R)-2-phosphoglycerate. Glutamate 219 serves as the catalytic Proton donor. Aspartate 256, glutamate 310, and aspartate 337 together coordinate Mg(2+). 4 residues coordinate (2R)-2-phosphoglycerate: lysine 362, arginine 391, serine 392, and lysine 413. Lysine 362 serves as the catalytic Proton acceptor.

The protein belongs to the enolase family. The cofactor is Mg(2+).

Its subcellular location is the cytoplasm. It localises to the secreted. The protein resides in the cell surface. It carries out the reaction (2R)-2-phosphoglycerate = phosphoenolpyruvate + H2O. Its pathway is carbohydrate degradation; glycolysis; pyruvate from D-glyceraldehyde 3-phosphate: step 4/5. In terms of biological role, catalyzes the reversible conversion of 2-phosphoglycerate (2-PG) into phosphoenolpyruvate (PEP). It is essential for the degradation of carbohydrates via glycolysis. In Mycoplasma genitalium (strain ATCC 33530 / DSM 19775 / NCTC 10195 / G37) (Mycoplasmoides genitalium), this protein is Enolase.